A 431-amino-acid polypeptide reads, in one-letter code: GTPase Obg (431 aa).

Positions 1-158 constitute an Obg domain; the sequence is MFVDQVKISL…IEVTLELKLL (158 aa). The tract at residues 118 to 144 is disordered; the sequence is KGGRGGRGNSRFASPRNPAPDFSENGE. The OBG-type G domain maps to 159-330; sequence ADVGLVGFPS…LLYAIADKLE (172 aa). GTP-binding positions include 165–172, 190–194, 212–215, 282–285, and 311–313; these read GFPSVGKS, FTTIK, DLPG, NKMD, and STF. Mg(2+) is bound by residues Ser172 and Thr192. An OCT domain is found at 353-431; that stretch reads KHTPSQDKFT…ILGGEFEFVE (79 aa).

The protein belongs to the TRAFAC class OBG-HflX-like GTPase superfamily. OBG GTPase family. Monomer. Mg(2+) is required as a cofactor.

It is found in the cytoplasm. Functionally, an essential GTPase which binds GTP, GDP and possibly (p)ppGpp with moderate affinity, with high nucleotide exchange rates and a fairly low GTP hydrolysis rate. Plays a role in control of the cell cycle, stress response, ribosome biogenesis and in those bacteria that undergo differentiation, in morphogenesis control. This chain is GTPase Obg, found in Staphylococcus saprophyticus subsp. saprophyticus (strain ATCC 15305 / DSM 20229 / NCIMB 8711 / NCTC 7292 / S-41).